The primary structure comprises 405 residues: Probable tRNA sulfurtransferase (405 aa).

The THUMP domain maps to 60–165; that stretch reads TEVDKRLKKV…QDAVYISNQL (106 aa). Residues 183 to 184, 208 to 209, Arg265, Gly287, and Gln296 each bind ATP; these read ML and HF.

This sequence belongs to the ThiI family.

Its subcellular location is the cytoplasm. The catalysed reaction is [ThiI sulfur-carrier protein]-S-sulfanyl-L-cysteine + a uridine in tRNA + 2 reduced [2Fe-2S]-[ferredoxin] + ATP + H(+) = [ThiI sulfur-carrier protein]-L-cysteine + a 4-thiouridine in tRNA + 2 oxidized [2Fe-2S]-[ferredoxin] + AMP + diphosphate. It carries out the reaction [ThiS sulfur-carrier protein]-C-terminal Gly-Gly-AMP + S-sulfanyl-L-cysteinyl-[cysteine desulfurase] + AH2 = [ThiS sulfur-carrier protein]-C-terminal-Gly-aminoethanethioate + L-cysteinyl-[cysteine desulfurase] + A + AMP + 2 H(+). Its pathway is cofactor biosynthesis; thiamine diphosphate biosynthesis. Its function is as follows. Catalyzes the ATP-dependent transfer of a sulfur to tRNA to produce 4-thiouridine in position 8 of tRNAs, which functions as a near-UV photosensor. Also catalyzes the transfer of sulfur to the sulfur carrier protein ThiS, forming ThiS-thiocarboxylate. This is a step in the synthesis of thiazole, in the thiamine biosynthesis pathway. The sulfur is donated as persulfide by IscS. The sequence is that of Probable tRNA sulfurtransferase from Lactobacillus acidophilus (strain ATCC 700396 / NCK56 / N2 / NCFM).